A 305-amino-acid chain; its full sequence is Nitrogen assimilation regulatory protein nac (305 aa).

Residues 1–58 (MNFRRLKYFVKIVDIGSLTQAAEVLHIAQPALSQQVATLEGELNQQLLIRTKRGVTPT) form the HTH lysR-type domain. The segment at residues 18 to 37 (LTQAAEVLHIAQPALSQQVA) is a DNA-binding region (H-T-H motif).

It belongs to the LysR transcriptional regulatory family.

Transcriptional activator for the hut, put and ure operons and repressor for the gdh and gltB operons in response to nitrogen limitation. Negative regulator of its own expression. The sequence is that of Nitrogen assimilation regulatory protein nac (nac) from Escherichia coli (strain K12).